The primary structure comprises 176 residues: Translation initiation factor IF-3 (176 aa).

Belongs to the IF-3 family. Monomer.

It is found in the cytoplasm. Its function is as follows. IF-3 binds to the 30S ribosomal subunit and shifts the equilibrium between 70S ribosomes and their 50S and 30S subunits in favor of the free subunits, thus enhancing the availability of 30S subunits on which protein synthesis initiation begins. This chain is Translation initiation factor IF-3, found in Streptococcus thermophilus (strain ATCC BAA-491 / LMD-9).